Reading from the N-terminus, the 368-residue chain is Polymerase delta-interacting protein 2 (368 aa).

Residues methionine 1–leucine 51 constitute a mitochondrion transit peptide. Residues arginine 235 to lysine 360 form the ApaG domain. The residue at position 292 (threonine 292) is a Phosphothreonine.

In terms of assembly, interacts with PCNA and POLD2. Interacts with SSBP1. Interacts with PRIMPOL; leading to enhance DNA polymerase activity of PRIMPOL. Interacts with POLH. Interacts with POLD1; leading to stimulate DNA polymerase activity of POLD1.

The protein localises to the mitochondrion matrix. It localises to the nucleus. Involved in DNA damage tolerance by regulating translesion synthesis (TLS) of templates carrying DNA damage lesions such as 8oxoG and abasic sites. May act by stimulating activity of DNA polymerases involved in TLS, such as PRIMPOL and polymerase delta (POLD1). In Homo sapiens (Human), this protein is Polymerase delta-interacting protein 2.